The primary structure comprises 197 residues: UPF0056 inner membrane protein YhgN (197 aa).

Residues 1-3 (MNE) lie on the Periplasmic side of the membrane. Residues 4–24 (IISAAVLLILIMDPLGNLPIF) form a helical membrane-spanning segment. The Cytoplasmic segment spans residues 25–44 (MSVLKHTEPKRRRAIMVREL). The chain crosses the membrane as a helical span at residues 45–65 (LIALLVMLVFLFAGEKILAFL). The Periplasmic portion of the chain corresponds to 66–71 (SLRAET). A helical membrane pass occupies residues 72–92 (VSISGGIILFLIAIKMIFPSA). Topologically, residues 93–105 (SGNSSGLPAGEEP) are cytoplasmic. A helical transmembrane segment spans residues 106–126 (FIVPLAIPLVAGPTILATLML). Over 127-138 (LSHQYPNQMGHL) the chain is Periplasmic. The helical transmembrane segment at 139–159 (VIALLLAWGGTFVILLQSSLF) threads the bilayer. The Cytoplasmic segment spans residues 160 to 173 (LRLLGEKGVNALER). A helical transmembrane segment spans residues 174–194 (LMGLILVMMATQMFLDGIRMW). The Periplasmic portion of the chain corresponds to 195-197 (MKG).

The protein belongs to the UPF0056 (MarC) family.

It is found in the cell inner membrane. In Escherichia coli O157:H7, this protein is UPF0056 inner membrane protein YhgN (yhgN).